The sequence spans 220 residues: Large ribosomal subunit protein uL3 (220 aa).

This sequence belongs to the universal ribosomal protein uL3 family. In terms of assembly, part of the 50S ribosomal subunit. Forms a cluster with proteins L14 and L19.

One of the primary rRNA binding proteins, it binds directly near the 3'-end of the 23S rRNA, where it nucleates assembly of the 50S subunit. The protein is Large ribosomal subunit protein uL3 of Staphylococcus carnosus (strain TM300).